The sequence spans 674 residues: Protein asunder (674 aa).

Residues 516–538 (HKAKDQYRLLYRELEQLIQLNAS) are a coiled coil. A Nuclear localization signal (NLS) motif is present at residues 601 to 607 (LKASKRR).

It belongs to the Integrator subunit 13 family. In terms of assembly, belongs to the multiprotein complex Integrator, at least composed of IntS1, IntS2, IntS3, IntS4, omd/IntS5, IntS6, defl/IntS7, IntS8, IntS9, IntS10, IntS11, IntS12, asun/IntS13, IntS14 and IntS15. The core complex associates with protein phosphatase 2A subunits mts/PP2A and Pp2A-29B, to form the Integrator-PP2A (INTAC) complex. Post-translationally, phosphorylated.

Its subcellular location is the nucleus. It localises to the cytoplasm. The protein localises to the perinuclear region. Its function is as follows. Component of the integrator complex, a multiprotein complex that terminates RNA polymerase II (Pol II) transcription in the promoter-proximal region of genes. The integrator complex provides a quality checkpoint during transcription elongation by driving premature transcription termination of transcripts that are unfavorably configured for transcriptional elongation: the complex terminates transcription by (1) catalyzing dephosphorylation of the C-terminal domain (CTD) of Pol II subunit Polr2A/Rbp1 and Spt5, and (2) degrading the exiting nascent RNA transcript via endonuclease activity. The integrator complex is also involved in the 3'-end processing of the U7 snRNA, and also the spliceosomal snRNAs U1, U2, U4 and U5. The chain is Protein asunder (asun) from Drosophila persimilis (Fruit fly).